Consider the following 331-residue polypeptide: B-box zinc finger protein 21 (331 aa).

Zn(2+) contacts are provided by cysteine 5, cysteine 8, cysteine 28, histidine 34, cysteine 60, cysteine 63, cysteine 83, and histidine 93. A B box-type 1; atypical zinc finger spans residues 5-47; the sequence is CDVCDKEEASVFCTADEASLCGGCDHQVHHANKLASKHLRFSL. A B box-type 2; atypical zinc finger spans residues 60–102; sequence CDICQDKKALLFCQQDRAILCKDCDSSIHAANEHTKKHDRFLL. Low complexity-rich tracts occupy residues 115 to 126 and 228 to 238; these read KPTSKSSSSSSS and NNNNNNNNNNN. Disordered stretches follow at residues 115-167 and 209-241; these read KPTS…GGDA and DDDGVLPYMEPEDDNNTKRNNNNNNNNNNNTVS.

In terms of assembly, interacts with COP1, HY5 and BBX32. Interacts with FLZ1.

The protein resides in the nucleus. Transcription activator that acts as a positive regulator of seedling photomorphogenesis. Acts downstream of COP1 and play an important role in early and long-term adjustment of the shade avoidance syndrome (SAS) responses in natural environments. The chain is B-box zinc finger protein 21 from Arabidopsis thaliana (Mouse-ear cress).